The chain runs to 318 residues: MIEIKDVGKIFGDTKVLENISLDIKEGEVFGIIGRSGAGKSTLLRCLNGLENYDEGSIKVMDKEVKDLNNIELRKLRKDMGMIFQGFNIMNSKNIYDNVALPLQVWKKDKKYIDEKVRELLKLVGLENKAKSYPRELSGGQKQRVAIARALTMEPKVLLCDEATSALDPETTKSILKLIQKINKELKITVVVVTHQMEVIKEICNRIALIDGRKVSAYGEVKDLFLRPEGELKKIIEQEELLPNEGVNIKLFFPSNASQQSVITSMARELNVDFSIVWGKLESFRKEVLGSLIINIEEDKKVAICEYLNKKSILWEVI.

In terms of domain architecture, ABC transporter spans 2–237; the sequence is IEIKDVGKIF…PEGELKKIIE (236 aa). 34–41 is an ATP binding site; that stretch reads GRSGAGKS.

This sequence belongs to the ABC transporter superfamily. Methionine importer (TC 3.A.1.24) family. The complex is composed of two ATP-binding proteins (MetN), two transmembrane proteins (MetI) and a solute-binding protein (MetQ).

The protein localises to the cell membrane. The enzyme catalyses L-methionine(out) + ATP + H2O = L-methionine(in) + ADP + phosphate + H(+). It catalyses the reaction D-methionine(out) + ATP + H2O = D-methionine(in) + ADP + phosphate + H(+). In terms of biological role, part of the ABC transporter complex MetNIQ involved in methionine import. Responsible for energy coupling to the transport system. This Clostridium tetani (strain Massachusetts / E88) protein is Methionine import ATP-binding protein MetN.